Consider the following 375-residue polypeptide: Xylose transport system permease protein XylH (375 aa).

10 helical membrane-spanning segments follow: residues 9-29, 52-72, 85-105, 118-138, 159-179, 199-219, 220-240, 271-291, 319-339, and 348-368; these read LQVY…SVAT, LAIG…VGSL, VWWG…GLIF, VPSF…LIGL, LSDI…VLWG, DFTK…LLND, YRGI…GLFL, KLII…ILSA, LAGG…IASL, and VPTF…VWID.

Belongs to the binding-protein-dependent transport system permease family. AraH/RbsC subfamily.

The protein resides in the cell inner membrane. In terms of biological role, part of the binding-protein-dependent transport system for D-xylose. Probably responsible for the translocation of the substrate across the membrane. This is Xylose transport system permease protein XylH (xylH) from Haemophilus influenzae (strain ATCC 51907 / DSM 11121 / KW20 / Rd).